Here is a 206-residue protein sequence, read N- to C-terminus: Probable GTP-binding protein EngB (206 aa).

The EngB-type G domain maps to 23–195 (DLLEIAFVGR…WARIEAIMAE (173 aa)). Residues 31–38 (GRSNVGKS), 58–62 (GRTQL), 76–79 (DLPG), 143–146 (TKCD), and 174–176 (FSA) contribute to the GTP site. 2 residues coordinate Mg(2+): Ser-38 and Thr-60.

Belongs to the TRAFAC class TrmE-Era-EngA-EngB-Septin-like GTPase superfamily. EngB GTPase family. Requires Mg(2+) as cofactor.

Necessary for normal cell division and for the maintenance of normal septation. This Geobacter sulfurreducens (strain ATCC 51573 / DSM 12127 / PCA) protein is Probable GTP-binding protein EngB.